Reading from the N-terminus, the 387-residue chain is Limonene 1,2-monooxygenase (387 aa).

The protein belongs to the bacterial luciferase oxidoreductase family. Requires FAD as cofactor.

The enzyme catalyses (4S)-limonene + NADPH + O2 + H(+) = limonene 1,2-epoxide + NADP(+) + H2O. The catalysed reaction is (4S)-limonene + NADH + O2 + H(+) = limonene 1,2-epoxide + NAD(+) + H2O. It catalyses the reaction (4R)-limonene + NADH + O2 + H(+) = limonene 1,2-epoxide + NAD(+) + H2O. It carries out the reaction (4R)-limonene + NADPH + O2 + H(+) = limonene 1,2-epoxide + NADP(+) + H2O. It participates in terpene metabolism; (4R)-limonene degradation; (1S,4R)-1-hydroxylimonen-2-one from (4R)-limonene: step 1/3. Acts on both enantiomers of limonene by their NAD-dependent epoxidation at the 1,2 double bond forming limonene-1,2-epoxide. This Rhodococcus erythropolis (Arthrobacter picolinophilus) protein is Limonene 1,2-monooxygenase (limB).